A 99-amino-acid polypeptide reads, in one-letter code: Large ribosomal subunit protein bL27 (99 aa).

Positions 1–9 (MLIMNLQLF) are excised as a propeptide.

This sequence belongs to the bacterial ribosomal protein bL27 family. In terms of processing, the N-terminus is cleaved by ribosomal processing cysteine protease Prp.

The polypeptide is Large ribosomal subunit protein bL27 (Clostridium botulinum (strain Alaska E43 / Type E3)).